Reading from the N-terminus, the 155-residue chain is Ribosomal RNA large subunit methyltransferase H (155 aa).

S-adenosyl-L-methionine is bound by residues L72, G103, and L122–L127.

It belongs to the RNA methyltransferase RlmH family. In terms of assembly, homodimer.

The protein resides in the cytoplasm. It catalyses the reaction pseudouridine(1915) in 23S rRNA + S-adenosyl-L-methionine = N(3)-methylpseudouridine(1915) in 23S rRNA + S-adenosyl-L-homocysteine + H(+). In terms of biological role, specifically methylates the pseudouridine at position 1915 (m3Psi1915) in 23S rRNA. This is Ribosomal RNA large subunit methyltransferase H from Mannheimia succiniciproducens (strain KCTC 0769BP / MBEL55E).